The primary structure comprises 788 residues: Ribosome biogenesis protein ERB1 (788 aa).

The interval 1–91 (MGDLKGSRKR…SKPIREKSKP (91 aa)) is disordered. Basic and acidic residues predominate over residues 38 to 50 (LSDKSHDTEHSSD). The span at 51-78 (SEIELVDDLSSDDGEEYEDEFDSDEIPS) shows a compositional bias: acidic residues. A compositionally biased stretch (basic and acidic residues) spans 80–91 (IESKPIREKSKP). WD repeat units lie at residues 433–472 (GHSG…QIWS), 476–516 (SDEE…PEME), 613–651 (KGGG…LVKI), 654–699 (PGAR…RPYK), 703–742 (YHQK…DLLS), and 758–788 (TGEL…RLWT).

Belongs to the WD repeat BOP1/ERB1 family. As to quaternary structure, component of the NOP7 complex, composed of ERB1, NOP7 and YTM1. The complex is held together by ERB1, which interacts with NOP7 via its N-terminal domain and with YTM1 via a high-affinity interaction between the seven-bladed beta-propeller domains of the 2 proteins. The NOP7 complex associates with the 66S pre-ribosome.

The protein localises to the nucleus. It localises to the nucleolus. Its subcellular location is the nucleoplasm. Its function is as follows. Component of the NOP7 complex, which is required for maturation of the 25S and 5.8S ribosomal RNAs and formation of the 60S ribosome. This chain is Ribosome biogenesis protein ERB1, found in Ajellomyces capsulatus (strain NAm1 / WU24) (Darling's disease fungus).